A 351-amino-acid chain; its full sequence is Probable protein phosphatase 2C 41 (351 aa).

The PPM-type phosphatase domain maps to 62 to 348; it reads FTSICSNRGE…DDISVLCLFF (287 aa). Residues Asp98, Gly99, Asp293, and Asp339 each contribute to the Mn(2+) site.

This sequence belongs to the PP2C family. Mg(2+) serves as cofactor. Mn(2+) is required as a cofactor.

The enzyme catalyses O-phospho-L-seryl-[protein] + H2O = L-seryl-[protein] + phosphate. The catalysed reaction is O-phospho-L-threonyl-[protein] + H2O = L-threonyl-[protein] + phosphate. In Arabidopsis thaliana (Mouse-ear cress), this protein is Probable protein phosphatase 2C 41.